The primary structure comprises 151 residues: UPF0208 membrane protein YPDSF_1972 (151 aa).

Transmembrane regions (helical) follow at residues 46-66 (FGIRFMPPLAIFTLTWQIALG) and 69-89 (LGPAIATALFACGLPLQGLWW).

The protein belongs to the UPF0208 family.

The protein localises to the cell inner membrane. The chain is UPF0208 membrane protein YPDSF_1972 from Yersinia pestis (strain Pestoides F).